Here is a 225-residue protein sequence, read N- to C-terminus: NAD(P)H-quinone oxidoreductase subunit K, chloroplastic (225 aa).

[4Fe-4S] cluster contacts are provided by Cys43, Cys44, Cys108, and Cys139.

The protein belongs to the complex I 20 kDa subunit family. In terms of assembly, NDH is composed of at least 16 different subunits, 5 of which are encoded in the nucleus. The cofactor is [4Fe-4S] cluster.

It localises to the plastid. It is found in the chloroplast thylakoid membrane. It carries out the reaction a plastoquinone + NADH + (n+1) H(+)(in) = a plastoquinol + NAD(+) + n H(+)(out). The enzyme catalyses a plastoquinone + NADPH + (n+1) H(+)(in) = a plastoquinol + NADP(+) + n H(+)(out). Its function is as follows. NDH shuttles electrons from NAD(P)H:plastoquinone, via FMN and iron-sulfur (Fe-S) centers, to quinones in the photosynthetic chain and possibly in a chloroplast respiratory chain. The immediate electron acceptor for the enzyme in this species is believed to be plastoquinone. Couples the redox reaction to proton translocation, and thus conserves the redox energy in a proton gradient. This Hordeum vulgare (Barley) protein is NAD(P)H-quinone oxidoreductase subunit K, chloroplastic.